Here is a 242-residue protein sequence, read N- to C-terminus: Probable transcriptional regulatory protein NGO_1291 (242 aa).

The protein belongs to the TACO1 family.

It localises to the cytoplasm. The protein is Probable transcriptional regulatory protein NGO_1291 of Neisseria gonorrhoeae (strain ATCC 700825 / FA 1090).